A 918-amino-acid chain; its full sequence is Nitrate reductase [NADH] (918 aa).

The interval 25–44 (KNGPNHRADSPVRGCNFPNS) is disordered. C195 serves as a coordination point for Mo-molybdopterin. The Cytochrome b5 heme-binding domain maps to 543 to 618 (SNTYTLSEVK…LEDYRIGELI (76 aa)). Heme contacts are provided by H578 and H601. The FAD-binding FR-type domain maps to 661 to 774 (NEKIPCKLIS…KGPLGHIEYT (114 aa)). Residues 714–717 (RAYT), 731–735 (VVKVY), F736, F743, 748–750 (IMS), and T801 contribute to the FAD site.

Belongs to the nitrate reductase family. Homodimer. It depends on FAD as a cofactor. The cofactor is heme. Mo-molybdopterin is required as a cofactor.

The enzyme catalyses nitrite + NAD(+) + H2O = nitrate + NADH + H(+). Its function is as follows. Nitrate reductase is a key enzyme involved in the first step of nitrate assimilation in plants, fungi and bacteria. This chain is Nitrate reductase [NADH], found in Cucurbita maxima (Pumpkin).